Consider the following 1207-residue polypeptide: Putative coatomer subunit alpha (1207 aa).

8 WD repeats span residues 9 to 50, 51 to 90, 93 to 134, 135 to 174, 210 to 249, 254 to 293, 296 to 336, and 370 to 411; these read SRSS…DRFD, GHDGPVRGIAFHPTQPLFVSGGDDYKVNVWNYKSRKLLFS, GHMD…AILT, GHSHYVMCAAFHPSEDLIVSASLDQTVRVWDISGLRMKNA, GHDRGVNWCAFHPTLPLILSAGDDRLVKLWRMTASKAWEV, GHFNNVSCCLFHPHQELILSASEDKTIRVWDLNRRTAVQT, RDND…HALN, and SAWL…NSLP. A phosphoserine mark is found at S409 and S942.

In terms of assembly, oligomeric complex that consists of at least the alpha, beta, beta', gamma, delta, epsilon and zeta subunits.

It is found in the cytoplasm. Its subcellular location is the golgi apparatus membrane. Its function is as follows. The coatomer is a cytosolic protein complex that binds to dilysine motifs and reversibly associates with Golgi non-clathrin-coated vesicles, which further mediate biosynthetic protein transport from the ER, via the Golgi up to the trans Golgi network. Coatomer complex is required for budding from Golgi membranes, and is essential for the retrograde Golgi-to-ER transport of dilysine-tagged proteins. This is Putative coatomer subunit alpha from Schizosaccharomyces pombe (strain 972 / ATCC 24843) (Fission yeast).